We begin with the raw amino-acid sequence, 622 residues long: Golgin subfamily A member 6-like protein 7 (622 aa).

Disordered stretches follow at residues 1-82 (MMSE…QQAL), 251-496 (RKHE…RKQV), and 511-580 (EKMQ…HDNR). Basic and acidic residues-rich tracts occupy residues 57–74 (SPEDKQQNRAQLKEENKA), 251–275 (RKHEEKMWRQEQRLRDQEKELREQE), 283–332 (EQMR…KQEE), 339–367 (EQMRKQEKQMLKQKEQMRKQEEQMWKQEE), 374–388 (EQMRKQEEQMWKQEE), and 395–420 (EQMRKQEEQMWKQEEQMGEQMRKQEE). Residues 100-534 (KTELETALHD…EKRREKKERM (435 aa)) adopt a coiled-coil conformation. Residues 477–489 (QMGEQEEQMGEQE) show a composition bias toward acidic residues. Composition is skewed to basic and acidic residues over residues 511 to 546 (EKMQEEEEKIRRQVEKRREKKERMGEQEKTQEERCS) and 567 to 580 (PAREAGKGYSHDNR).

Belongs to the GOLGA6 family.

In Homo sapiens (Human), this protein is Golgin subfamily A member 6-like protein 7.